Consider the following 182-residue polypeptide: MGRHGSRWSRPPCFRVLRLWTYAHRCDLGHTDPLSRRTEMTTTERPTTMCEAFQRTAVMDPDAVALRTPGGNQTMTWRDYAAQVRRVAAGLAGLGVRRGDTVSLMMANRIEFYPLDVGAQHVGATSFSVYNTLPAEQLTYVFDNAGTKVVICEQQYVDRVRASGVPIEHIVCVDGAPPARSR.

This is an uncharacterized protein from Mycobacterium tuberculosis (strain CDC 1551 / Oshkosh).